The chain runs to 256 residues: Trans-aconitate 2-methyltransferase (256 aa).

This sequence belongs to the methyltransferase superfamily. Tam family.

It localises to the cytoplasm. It catalyses the reaction trans-aconitate + S-adenosyl-L-methionine = (E)-3-(methoxycarbonyl)pent-2-enedioate + S-adenosyl-L-homocysteine. Catalyzes the S-adenosylmethionine monomethyl esterification of trans-aconitate. This is Trans-aconitate 2-methyltransferase from Rhodopseudomonas palustris (strain BisB5).